Reading from the N-terminus, the 358-residue chain is Thiol protease aleurain (358 aa).

Positions 1 to 21 (MSAKTILSSVVLVVLVAASAA) are cleaved as a signal peptide. Positions 22 to 42 (ANIGFDESNPIRMVSDGLREV) are interaction with VSR1. A propeptide spans 22–140 (ANIGFDESNP…KGSHKVTEAA (119 aa)) (activation peptide). A glycan (N-linked (GlcNAc...) asparagine) is linked at N125. Disulfide bonds link C162-C205 and C196-C238. The active site involves C165. Residue N254 is glycosylated (N-linked (GlcNAc...) asparagine). A disulfide bond links C296 and C346. Catalysis depends on residues H305 and N325.

It belongs to the peptidase C1 family. As to quaternary structure, interacts with VSR1/BP80B. As to expression, expressed in leaves (at protein level).

The protein resides in the vacuole. The enzyme catalyses Hydrolysis of proteins, acting as an aminopeptidase (notably, cleaving Arg-|-Xaa bonds) as well as an endopeptidase.. May play a role in proteolysis leading to mobilization of nitrogen during senescence and starvation. The chain is Thiol protease aleurain from Arabidopsis thaliana (Mouse-ear cress).